Here is a 151-residue protein sequence, read N- to C-terminus: 6,7-dimethyl-8-ribityllumazine synthase (151 aa).

5-amino-6-(D-ribitylamino)uracil is bound by residues F23, 55–57, and 79–81; these read AYE and AVI. 84–85 provides a ligand contact to (2S)-2-hydroxy-3-oxobutyl phosphate; that stretch reads AT. H87 serves as the catalytic Proton donor. A 5-amino-6-(D-ribitylamino)uracil-binding site is contributed by F111. R125 provides a ligand contact to (2S)-2-hydroxy-3-oxobutyl phosphate.

Belongs to the DMRL synthase family.

It catalyses the reaction (2S)-2-hydroxy-3-oxobutyl phosphate + 5-amino-6-(D-ribitylamino)uracil = 6,7-dimethyl-8-(1-D-ribityl)lumazine + phosphate + 2 H2O + H(+). Its pathway is cofactor biosynthesis; riboflavin biosynthesis; riboflavin from 2-hydroxy-3-oxobutyl phosphate and 5-amino-6-(D-ribitylamino)uracil: step 1/2. Functionally, catalyzes the formation of 6,7-dimethyl-8-ribityllumazine by condensation of 5-amino-6-(D-ribitylamino)uracil with 3,4-dihydroxy-2-butanone 4-phosphate. This is the penultimate step in the biosynthesis of riboflavin. This chain is 6,7-dimethyl-8-ribityllumazine synthase, found in Leptospira interrogans serogroup Icterohaemorrhagiae serovar copenhageni (strain Fiocruz L1-130).